We begin with the raw amino-acid sequence, 675 residues long: Heat shock 70 kDa protein, mitochondrial (675 aa).

A mitochondrion-targeting transit peptide spans 1–52 (MAATLLRSLQRRNLSSSSVSAFRSLTGSTKTSYATHKLASLTRPFSSRPAGN). Positions 639–675 (VSKIGQHMSGGSSGGPSEGGSQGGEQAPEAEYEEVKK) are disordered. The span at 649 to 661 (GSSGGPSEGGSQG) shows a compositional bias: gly residues. Over residues 666 to 675 (PEAEYEEVKK) the composition is skewed to acidic residues.

It belongs to the heat shock protein 70 family.

Its subcellular location is the mitochondrion. This Pisum sativum (Garden pea) protein is Heat shock 70 kDa protein, mitochondrial (HSP1).